We begin with the raw amino-acid sequence, 107 residues long: Neuroparsin-A (107 aa).

An N-terminal signal peptide occupies residues Met1–Ala22. Positions Glu23–Arg24 are excised as a propeptide.

Homodimer; disulfide-linked.

Neurosparins are multifunctional neurohormones: they inhibit the effects of juvenile hormone, stimulate fluid reabsorption of isolated recta and induces an increase in hemolymph lipid and trehalose levels. In Locusta migratoria (Migratory locust), this protein is Neuroparsin-A.